Reading from the N-terminus, the 431-residue chain is Adenylosuccinate synthetase (431 aa).

GTP contacts are provided by residues 13-19 and 41-43; these read GDEGKGK and GHT. Aspartate 14 serves as the catalytic Proton acceptor. Mg(2+) contacts are provided by aspartate 14 and glycine 41. Residues 14–17, 39–42, threonine 130, arginine 144, glutamine 225, threonine 240, and arginine 304 each bind IMP; these read DEGK and NAGH. Histidine 42 functions as the Proton donor in the catalytic mechanism. 300-306 provides a ligand contact to substrate; that stretch reads AVTGRPR. GTP-binding positions include arginine 306, 332-334, and 415-417; these read KLD and STG.

This sequence belongs to the adenylosuccinate synthetase family. Homodimer. The cofactor is Mg(2+).

The protein resides in the cytoplasm. It carries out the reaction IMP + L-aspartate + GTP = N(6)-(1,2-dicarboxyethyl)-AMP + GDP + phosphate + 2 H(+). It functions in the pathway purine metabolism; AMP biosynthesis via de novo pathway; AMP from IMP: step 1/2. Its function is as follows. Plays an important role in the de novo pathway of purine nucleotide biosynthesis. Catalyzes the first committed step in the biosynthesis of AMP from IMP. The polypeptide is Adenylosuccinate synthetase (Legionella pneumophila (strain Lens)).